A 137-amino-acid chain; its full sequence is MKQRTLSIIKPDALKKKVVGKIIDRFESNGLEVIAMKRLHLSVKDAENFYAIHRERPFFKDLIEFMVSGPVVVMVLEGKDAVAKNRDLMGATDPKLAQKGTIRADFAESIDANAVHGSDSLENAHNEIAFFFAARDL.

The ATP site is built by K10, F58, R86, T92, R103, and N113. H116 acts as the Pros-phosphohistidine intermediate in catalysis.

The protein belongs to the NDK family. As to quaternary structure, homotetramer. It depends on Mg(2+) as a cofactor.

It is found in the cytoplasm. It catalyses the reaction a 2'-deoxyribonucleoside 5'-diphosphate + ATP = a 2'-deoxyribonucleoside 5'-triphosphate + ADP. The enzyme catalyses a ribonucleoside 5'-diphosphate + ATP = a ribonucleoside 5'-triphosphate + ADP. Major role in the synthesis of nucleoside triphosphates other than ATP. The ATP gamma phosphate is transferred to the NDP beta phosphate via a ping-pong mechanism, using a phosphorylated active-site intermediate. This is Nucleoside diphosphate kinase from Helicobacter pylori (strain G27).